A 252-amino-acid polypeptide reads, in one-letter code: Imidazole glycerol phosphate synthase subunit HisF (252 aa).

Residues D11 and D130 contribute to the active site.

It belongs to the HisA/HisF family. Heterodimer of HisH and HisF.

The protein localises to the cytoplasm. The catalysed reaction is 5-[(5-phospho-1-deoxy-D-ribulos-1-ylimino)methylamino]-1-(5-phospho-beta-D-ribosyl)imidazole-4-carboxamide + L-glutamine = D-erythro-1-(imidazol-4-yl)glycerol 3-phosphate + 5-amino-1-(5-phospho-beta-D-ribosyl)imidazole-4-carboxamide + L-glutamate + H(+). Its pathway is amino-acid biosynthesis; L-histidine biosynthesis; L-histidine from 5-phospho-alpha-D-ribose 1-diphosphate: step 5/9. Its function is as follows. IGPS catalyzes the conversion of PRFAR and glutamine to IGP, AICAR and glutamate. The HisF subunit catalyzes the cyclization activity that produces IGP and AICAR from PRFAR using the ammonia provided by the HisH subunit. This is Imidazole glycerol phosphate synthase subunit HisF from Geobacillus thermodenitrificans (strain NG80-2).